The chain runs to 438 residues: Serine hydroxymethyltransferase (438 aa).

Residues Leu-133 and 137 to 139 (GHL) contribute to the (6S)-5,6,7,8-tetrahydrofolate site. Lys-242 is modified (N6-(pyridoxal phosphate)lysine).

The protein belongs to the SHMT family. Homodimer. Pyridoxal 5'-phosphate is required as a cofactor.

It is found in the cytoplasm. The catalysed reaction is (6R)-5,10-methylene-5,6,7,8-tetrahydrofolate + glycine + H2O = (6S)-5,6,7,8-tetrahydrofolate + L-serine. Its pathway is one-carbon metabolism; tetrahydrofolate interconversion. It functions in the pathway amino-acid biosynthesis; glycine biosynthesis; glycine from L-serine: step 1/1. In terms of biological role, catalyzes the reversible interconversion of serine and glycine with tetrahydrofolate (THF) serving as the one-carbon carrier. This reaction serves as the major source of one-carbon groups required for the biosynthesis of purines, thymidylate, methionine, and other important biomolecules. Also exhibits THF-independent aldolase activity toward beta-hydroxyamino acids, producing glycine and aldehydes, via a retro-aldol mechanism. The chain is Serine hydroxymethyltransferase from Brucella suis (strain ATCC 23445 / NCTC 10510).